The sequence spans 320 residues: Small ribosomal subunit protein uS15m (320 aa).

Disordered regions lie at residues 37 to 60 and 214 to 242; these read NISQ…AQQR and QSLE…DTGS.

The protein belongs to the universal ribosomal protein uS15 family. Component of the mitochondrial small ribosomal subunit (mt-SSU). Mature N.crassa 74S mitochondrial ribosomes consist of a small (37S) and a large (54S) subunit. The 37S small subunit contains a 16S ribosomal RNA (16S mt-rRNA) and 32 different proteins. The 54S large subunit contains a 23S rRNA (23S mt-rRNA) and 42 different proteins.

It is found in the mitochondrion. Its function is as follows. Component of the mitochondrial ribosome (mitoribosome), a dedicated translation machinery responsible for the synthesis of mitochondrial genome-encoded proteins, including at least some of the essential transmembrane subunits of the mitochondrial respiratory chain. The mitoribosomes are attached to the mitochondrial inner membrane and translation products are cotranslationally integrated into the membrane. The chain is Small ribosomal subunit protein uS15m (mrps28) from Neurospora crassa (strain ATCC 24698 / 74-OR23-1A / CBS 708.71 / DSM 1257 / FGSC 987).